The following is a 352-amino-acid chain: Anthranilate phosphoribosyltransferase (352 aa).

Residues Gly83, 86 to 87, Thr91, 93 to 96, 111 to 119, and Ala123 each bind 5-phospho-alpha-D-ribose 1-diphosphate; these read GD, NIST, and KHGGRSVSS. Gly83 contributes to the anthranilate binding site. Residue Ser95 coordinates Mg(2+). Arg169 lines the anthranilate pocket. Mg(2+) is bound by residues Asp228 and Glu229.

Belongs to the anthranilate phosphoribosyltransferase family. Homodimer. The cofactor is Mg(2+).

The enzyme catalyses N-(5-phospho-beta-D-ribosyl)anthranilate + diphosphate = 5-phospho-alpha-D-ribose 1-diphosphate + anthranilate. It functions in the pathway amino-acid biosynthesis; L-tryptophan biosynthesis; L-tryptophan from chorismate: step 2/5. Catalyzes the transfer of the phosphoribosyl group of 5-phosphorylribose-1-pyrophosphate (PRPP) to anthranilate to yield N-(5'-phosphoribosyl)-anthranilate (PRA). The polypeptide is Anthranilate phosphoribosyltransferase (Neisseria meningitidis serogroup A / serotype 4A (strain DSM 15465 / Z2491)).